Reading from the N-terminus, the 120-residue chain is uncharacterized protein (120 aa).

The first 19 residues, 1–19, serve as a signal peptide directing secretion; the sequence is MTSFAVVARLITRAPRVRA. Disordered stretches follow at residues 48 to 71 and 90 to 120; these read VAKK…DKAK and DTVT…KNLK. Basic and acidic residues predominate over residues 90–103; that stretch reads DTVTGKTEETKESI.

This is an uncharacterized protein from Arabidopsis thaliana (Mouse-ear cress).